The chain runs to 216 residues: GTP cyclohydrolase 1 (216 aa).

Residues C108, H111, and C179 each contribute to the Zn(2+) site.

It belongs to the GTP cyclohydrolase I family. As to quaternary structure, toroid-shaped homodecamer, composed of two pentamers of five dimers.

The enzyme catalyses GTP + H2O = 7,8-dihydroneopterin 3'-triphosphate + formate + H(+). It participates in cofactor biosynthesis; 7,8-dihydroneopterin triphosphate biosynthesis; 7,8-dihydroneopterin triphosphate from GTP: step 1/1. This is GTP cyclohydrolase 1 from Shewanella oneidensis (strain ATCC 700550 / JCM 31522 / CIP 106686 / LMG 19005 / NCIMB 14063 / MR-1).